The sequence spans 278 residues: Elongation factor Ts (278 aa).

Residues 82–85 form an involved in Mg(2+) ion dislocation from EF-Tu region; that stretch reads TDFV.

This sequence belongs to the EF-Ts family.

Its subcellular location is the cytoplasm. Its function is as follows. Associates with the EF-Tu.GDP complex and induces the exchange of GDP to GTP. It remains bound to the aminoacyl-tRNA.EF-Tu.GTP complex up to the GTP hydrolysis stage on the ribosome. This chain is Elongation factor Ts (tsf), found in Streptomyces coelicolor (strain ATCC BAA-471 / A3(2) / M145).